The sequence spans 424 residues: SWI/SNF and RSC complexes subunit arp42 (424 aa).

It belongs to the actin family. Component of the RSC complex composed of at least arp9, arp42, rsc1, rsc4, rsc7, rsc9, rsc58, sfh1, snf21, ssr1, ssr2, ssr3 and ssr4. The complex interacts with histone and histone variant components of centromeric chromatin. Component of the SWI/SNF global transcription activator complex composed of at least arp9, arp42, snf5, snf22, snf30, sbf59, sol1, ssr1, ssr2, ssr3, ssr4 and tfg3.

Its subcellular location is the cytoplasm. It is found in the nucleus. In terms of biological role, component of the chromatin structure remodeling complex (RSC), which is involved in transcription regulation and nucleosome positioning. Controls particularly membrane and organelle development genes. Part of the SWI/SNF complex, an ATP-dependent chromatin remodeling complex, required for the positive and negative regulation of gene expression of a large number of genes. It changes chromatin structure by altering DNA-histone contacts within a nucleosome, leading eventually to a change in nucleosome position, thus facilitating or repressing binding of gene-specific transcription factors. This chain is SWI/SNF and RSC complexes subunit arp42 (arp42), found in Schizosaccharomyces pombe (strain 972 / ATCC 24843) (Fission yeast).